A 194-amino-acid polypeptide reads, in one-letter code: uncharacterized protein (194 aa).

It belongs to the calycin superfamily. Fatty-acid binding protein (FABP) family.

This is an uncharacterized protein from Caenorhabditis elegans.